The primary structure comprises 2322 residues: MNTTDCFIALLYALREIKALFLSRTQGKMEFTLYNGEKKVFYSRPNNHDNCWLNAILQLFRYVDEPFLEWVYDSPENLTLEAINKLEEITGLELHEGGPPALVVWNIKHLLYTGIGTASRPSEVCMVDGTDMCLADFHAGIFLKGQDHAVFACVTSDGWYAIDDEDFYPWTPNPADVLVFVPYDQEPFNAEWKAKVQKRLRGAGQSSPTTGSQNQSGNTGSIINNYYMQQYQNSMDTQLGDNAISGGSNEGSTDTTSTHTNNTQNNDWFSKLANTAFSGLFGALLADKKTEETTLLEDRILTTRNGHTTSTTQSSVGVTYGYATAEDFVSGPNTSGLETRVVQAERFFKTHLFDWVTSDPFGRCHLLELPTDHKGVYGSLTDSYAYMRNGWDVEVTAVGNQFNGGCLLVAMVPELCSISKRELYQLTLFPHQFINPRTNMTAHITVPYLGVNRYDQYKVHKPWTLVVMVVAPLTVNNEGAPQIKVYANIAPTNVHVAGELPSKEGIFPVACSDGYGGLVTTDPKTADPVYGKVFNPPRNLLPGRFTNLLDVAEACPTFLHFDGDVPYVTTKTDSDRVLAQFDLSLAAKHMSNTFLAGLAQYYTQYSGTINLHFMFTGPTDAKARYMVAYAPPGMEPPKTPEAAAHCIHAEWDTGLNSKFTFSIPYLSAADYAYTASDVAETTNVQGWVCLFQITHGKADGDALVVLASAGKDFDLRLPVDARTQTTSAGESADPVTATVENYGGETQVQRRQHTDIAFILDRFVKVKPKEQVNVLDLMQIPAHTLVGALLRTATYYFSDLELAVKHEGDLTWVPNGAPETALDNTTNPTAYHKEPLTRLALPYTAPHRVLATVYNGSSKYGDTSTNNVRGDLQVLAQKAERTLPTSFNFGAIKATRVTELLYRMKRAETYCPRPLLAIQPSDARHKQRIVAPAKQLLNFDLLKLAGDVESNPGPFFFSDVRANFTKLVDTVNQMQEDMSTKHGPDFNRLVSAFEELAAGVKAIRTGLDEAKPWYKLIKLLSRLSCMAAVAARSKDPVLVAIMLADTGLEILDSTFVVKKISDSLSSLFHVPAPAFSFGAPILLAGLVKVASSFFQSTPEDLERAEKQLKARDINDIFAVLKNGEWLVKLILAIRDWIKAWIASEEKFVTMTDLVPGILERQRDLNDPGKYKEAKEWLDNARQACLKSGNVHIANLCKVVAPAPSKSRPEPVVVCLRGKSGQGKSFLANVLAQAISTHFTGRTDSVWYCPPDPDHFDGYNQQTVVVMDDLGQNPDGKDFKYFAQMVSTTGFIPPMASLEDKGKPFNSKVIIATTNLYSGFTPKTMVCPDALNRRFHFDIDVSAKDGYKINNKLDIVKALEDTHANPVAMFQYDCALLNGMAVEMKRMQQDMFKPQPPLQNIYQLVQEVIERVELHEKVSSHLIFKQISIPSQKSVLYFLIEKGQHEAAIEFFEGMVHDSIKEELRPLIQQTSFVKRAFKRLKENFEVVALCLTLLANIVIMLRQARKRYQSVDDPLDGDVTLGDAEKNPLETSGASAVGFRERSPTEQGTREDANAEPVVFGREQPRAEGPYAGPLERQKPLKVKAELPQQEGPYAGPMERQKPLKVKAKAPVVKEGPYEGPVKKPVALKVKAKNLIVTESGAPPTDLQKMVMGNTKPVELILDGKTVAICCATGVFGTAYLVPRHLFAEKYDKIMLDGRALTDSDYRVFEFEIKVKGQDMLSDAALMVLHRGNRVRDITKHFRDVARMKKGTPVVGVINNADVGRLIFSGEALTYKDIVVCMDGDTMPGLFAYRASTKAGYCGGAVLAKDGAETFIVGTHSAGGNGIGYCSCVSRSMLLKMKAHIDPEPHHEGLIVDTRDVEERVHVMRKTKLAPTVAHGVFNPEFGPAALSNKDPRLNEGVVLDDVIFSKHKGDTRMSEEDKALFRRCAADYASRLHSVLGTANAPLSVYEAIKGVDGLDAMEPDTAPGLPWALQGKRRGALIDFENGTVGPEVEAALKLMESREYKFVCQTFLKDEIRPLEKVRAGKTRIVDVLPVEHILYTRMMIGRFCAQMHSNNGPQIGSAVGCNPDVDWQRFGTHFAQYKNVWDVDYSAFDANHCSDAMNIMFEEVFRTEFGFHPNAEWILKTLVNTEHAYENKRIVVEGGMPSGCSATSIINTILNNIYVLYALRRHYEGVELDTYTMISYGDDIVVASDYDLDFEALKPHFKSLGQTITPADKSDKGFVLGHSITDVTFLKRHFHMDYGTGFYKPVMASKTLEAILSFARRGTIQEKLISVAGLAVHSGPDEYRRLFEPFQGLFEIPSYRSLYLRWVNAVCGDA.

The region spanning 29–182 (MEFTLYNGEK…NPADVLVFVP (154 aa)) is the Peptidase C28 domain. Residues C51, H148, and D163 each act as for leader protease activity in the active site. Disordered stretches follow at residues 199 to 219 (RLRG…SGNT) and 238 to 262 (QLGD…HTNN). G202 carries the N-myristoyl glycine; by host lipid modification. 2 stretches are compositionally biased toward polar residues: residues 204–219 (GQSS…SGNT) and 238–251 (QLGD…SNEG). Residues 252 to 262 (STDTTSTHTNN) show a composition bias toward low complexity. The Cell attachment site signature appears at 869 to 871 (RGD). Residues 1189–1353 (NVHIANLCKV…DGYKINNKLD (165 aa)) form the SF3 helicase domain. Residue 1217–1224 (GKSGQGKS) participates in ATP binding. An intramembrane segment occupies 1484 to 1504 (FEVVALCLTLLANIVIMLRQA). Residues 1512–1574 (DDPLDGDVTL…PRAEGPYAGP (63 aa)) form a disordered region. Over residues 1539–1553 (FRERSPTEQGTREDA) the composition is skewed to basic and acidic residues. O-(5'-phospho-RNA)-tyrosine occurs at positions 1571, 1594, and 1618. Residues 1642-1838 (APPTDLQKMV…YCSCVSRSML (197 aa)) enclose the Peptidase C3 domain. H1685 (for protease 3C activity; Proton donor/acceptor) is an active-site residue. Residues D1723 and C1802 each act as for protease 3C activity in the active site. The Nuclear localization signal signature appears at 1868 to 1876 (MRKTKLAPT). One can recognise a RdRp catalytic domain in the interval 2086–2204 (KNVWDVDYSA…ASDYDLDFEA (119 aa)).

The protein belongs to the picornaviruses polyprotein family. Interacts with host ISG15. As to quaternary structure, interacts (via R-G-D motif) with host ITGAV/ITGB6. Interacts with host MAVS; this interaction inhibits binding of host TRAF3 to MAVS, thereby suppressing interferon-mediated responses. In terms of assembly, forms homooligomers. Homohexamer. Interacts with host VIM. Interacts with host BECN1. As to quaternary structure, interacts with host DCTN3. In terms of assembly, interacts with RNA-dependent RNA polymerase; this interaction allows 3B-1 to binds 2 polymerases and act as a primer. It also allows the recruitment of the RNA-dependent RNA polymerase to host membranes. Interacts with RNA-dependent RNA polymerase; this interaction allows 3B-2 to act as a primer. As to quaternary structure, interacts with RNA-dependent RNA polymerase; this interaction allows 3B-3 to act as a primer. In terms of assembly, interacts with 3B-1; this interaction allows 3B-1 to binds 2 polymerases and act as a primer. It also allows the recruitment of the RNA-dependent RNA polymerase to host membranes. Interacts with 3B-2; this interaction allows 3B-2 to act as a primer. Interacts with 3B-3; this interaction allows 3B-3 to act as a primer. Removes six residues from its own C-terminus, generating sLb(pro). Post-translationally, specific enzymatic cleavages in vivo by the viral proteases yield a variety of precursors and mature proteins. The polyprotein seems to be cotranslationally cleaved at the 2A/2B junction by a ribosomal skip from one codon to the next without formation of a peptide bond. This process would release the L-P1-2A peptide from the translational complex. In terms of processing, during virion maturation, immature virions are rendered infectious following cleavage of VP0 into VP4 and VP2. This maturation seems to be an autocatalytic event triggered by the presence of RNA in the capsid and is followed by a conformational change of the particle. Myristoylation is required during RNA encapsidation and formation of the mature virus particle. Post-translationally, uridylylated by the polymerase and covalently linked to the 5'-end of genomic RNA. These uridylylated forms act as a nucleotide-peptide primer for the polymerase.

The protein resides in the host nucleus. The protein localises to the host cytoplasm. Its subcellular location is the virion. It is found in the host endoplasmic reticulum membrane. It localises to the host cytoplasmic vesicle membrane. It catalyses the reaction Autocatalytically cleaves itself from the polyprotein of the foot-and-mouth disease virus by hydrolysis of a Lys-|-Gly bond, but then cleaves host cell initiation factor eIF-4G at bonds -Gly-|-Arg- and -Lys-|-Arg-.. The catalysed reaction is a ribonucleoside 5'-triphosphate + H2O = a ribonucleoside 5'-diphosphate + phosphate + H(+). The enzyme catalyses RNA(n) + a ribonucleoside 5'-triphosphate = RNA(n+1) + diphosphate. It carries out the reaction Selective cleavage of Gln-|-Gly bond in the poliovirus polyprotein. In other picornavirus reactions Glu may be substituted for Gln, and Ser or Thr for Gly.. Functionally, autocatalytically cleaves itself from the polyprotein at the L/VP0 junction. Also cleaves the host translation initiation factors EIF4G1 and EIF4G3, in order to shut off the capped cellular mRNA transcription. Plays a role in counteracting host innate antiviral response using diverse mechanisms. Possesses a deubiquitinase activity acting on both 'Lys-48' and 'Lys-63'-linked polyubiquitin chains. In turn, inhibits the ubiquitination and subsequent activation of key signaling molecules of type I IFN response such as host RIGI, TBK1, TRAF3 and TRAF6. Inhibits host NF-kappa-B activity by inducing a decrease in RELA mRNA levels. Cleaves a peptide bond in the C-terminus of host ISG15, resulting in the damaging of this modifier that can no longer be attached to target proteins. Also cleaves host G3BP1 and G3BP2 in order to inhibit cytoplasmic stress granules assembly. Lies on the inner surface of the capsid shell. After binding to the host receptor, the capsid undergoes conformational changes. Capsid protein VP4 is released, capsid protein VP1 N-terminus is externalized, and together, they shape a pore in the host membrane through which the viral genome is translocated into the host cell cytoplasm. After genome has been released, the channel shrinks. In terms of biological role, forms an icosahedral capsid of pseudo T=3 symmetry with capsid proteins VP1 and VP3. The capsid is composed of 60 copies of each capsid protein organized in the form of twelve pentamers and encloses the viral positive strand RNA genome. Upon acidifcation in the endosome, dissociates into pentamers. Its function is as follows. Forms an icosahedral capsid of pseudo T=3 symmetry with capsid proteins VP0 and VP3. The capsid is composed of 60 copies of each capsid protein organized in the form of twelve pentamers and encloses the viral positive strand RNA genome. Upon acidifcation in the endosome, dissociates into pentamers. Functionally, forms an icosahedral capsid of pseudo T=3 symmetry with capsid proteins VP2 and VP3. The capsid is composed of 60 copies of each capsid protein organized in the form of twelve pentamers and encloses the viral positive strand RNA genome. Mediates cell entry by attachment to an integrin receptor, usually host ITGAV/ITGB6. In addition, targets host MAVS to suppress type I IFN pathway. Upon acidifcation in the endosome, dissociates into pentamers. Mediates self-processing of the polyprotein by a translational effect termed 'ribosome skipping'. Mechanistically, 2A-mediated cleavage occurs between the C-terminal glycine and the proline of the downstream protein 2B. In the case of foot-and-mouth disease virus, the 2A oligopeptide is post-translationally 'trimmed' from the C-terminus of the upstream protein 1D by 3C proteinase. In terms of biological role, plays an essential role in the virus replication cycle by acting as a viroporin. Creates a pore in the host endoplasmic reticulum and as a consequence releases Ca2+ in the cytoplasm of infected cell. In turn, high levels of cytoplasmic calcium may trigger membrane trafficking and transport of viral ER-associated proteins to viroplasms, sites of viral genome replication. Its function is as follows. Associates with and induces structural rearrangements of intracellular membranes. Triggers host autophagy by interacting with host BECN1 and thereby promotes viral replication. Participates in viral replication and interacts with host DHX9. Displays RNA-binding, nucleotide binding and NTPase activities. May play a role in virion morphogenesis and viral RNA encapsidation by interacting with the capsid protein VP3. Functionally, plays important roles in virus replication, virulence and host range. Cooperates with host DDX56 to inhibit IRF3 nuclear translocation and subsequent type I interferon production. Covalently linked to the 5'-end of both the positive-strand and negative-strand genomic RNAs. Acts as a genome-linked replication primer. In terms of biological role, cysteine protease that generates mature viral proteins from the precursor polyprotein. In addition to its proteolytic activity, binds to viral RNA and thus influences viral genome replication. RNA and substrate bind cooperatively to the protease. Its function is as follows. RNA-directed RNA polymerase 3D-POL replicates genomic and antigenomic RNA by recognizing replications specific signals. Covalently attaches UMP to a tyrosine of VPg, which is used to prime RNA synthesis. The positive stranded RNA genome is first replicated at virus induced membranous vesicles, creating a dsRNA genomic replication form. This dsRNA is then used as template to synthesize positive stranded RNA genomes. ss(+)RNA genomes are either translated, replicated or encapsidated. The chain is Genome polyprotein from Foot-and-mouth disease virus (isolate Swine/Taiwan/OTai/1997 serotype O) (FMDV).